Reading from the N-terminus, the 835-residue chain is Protein translocase subunit SecA (835 aa).

Residues Gln85, 103–107 (GEGKT), and Asp492 contribute to the ATP site. The tract at residues 788–807 (VQGEAVHPSSDGEEAKKKPV) is disordered. Positions 819, 821, 830, and 831 each coordinate Zn(2+).

The protein belongs to the SecA family. As to quaternary structure, monomer and homodimer. Part of the essential Sec protein translocation apparatus which comprises SecA, SecYEG and auxiliary proteins SecDF. Other proteins may also be involved. It depends on Zn(2+) as a cofactor.

Its subcellular location is the cell membrane. It is found in the cytoplasm. The catalysed reaction is ATP + H2O + cellular proteinSide 1 = ADP + phosphate + cellular proteinSide 2.. In terms of biological role, part of the Sec protein translocase complex. Interacts with the SecYEG preprotein conducting channel. Has a central role in coupling the hydrolysis of ATP to the transfer of proteins into and across the cell membrane, serving as an ATP-driven molecular motor driving the stepwise translocation of polypeptide chains across the membrane. The chain is Protein translocase subunit SecA from Bacillus cereus (strain ATCC 14579 / DSM 31 / CCUG 7414 / JCM 2152 / NBRC 15305 / NCIMB 9373 / NCTC 2599 / NRRL B-3711).